Here is a 1786-residue protein sequence, read N- to C-terminus: MMVFQSFILGNLVSLCMKIINSVVVVGLYYGFLTTFSIGPSYLFLLRARVMDEGEEGTEKKVSATTGFIAGQLMMFISIYYAPLHLALGRPHTITVLALPYLLFHFFWNNHKHFFDYGSTTRNEMRNLRIQCVFLNNLIFQLFNHFILPSSMLARLVNIYMFRCNNKMLFVTSSFVGWLIGHILFMKWVGLVLVWIQQNNSIRSNVVIRSNKYKFLVSELRNSMARIFSILLFITCVYYLGRIPSPIFTKKLKGTSETGGTKQDQEVSTEEAPFPSLFSEEGEDLDKIDEMEEIRVNGKDKINKDDEFHVRTYYNYKTVSENLYGNKENSNLEFFKIKKKEDHFLWFEKPFVTLVFDYKRWNRPNRYIKNDKIENIVRNEMSQYFFYTCQSDGKERISFTYPPNLSTFFEMIQKRIPSFTKEKKTFDQVSTYWSLIHEEKRENLKKEFLNRIEALDKEWSVENILEKTTRFCYNEAKKEYLPKIYDPFLHGISRGRIKKLPPFQIITETYRKNNLGGSWINKIHGLLLKINYKKFEQTIEKFNRKSLSIEKKLSFFSEPQQEEKINSEEEIKTFKFLFDIVRTDSNDQTLIKNFMDFPEINKKVPRWSYKLISELEELEGENEENVPMEPGIRSRKAKRVVVFTDKEPHGEIYTNLKDNQNSDQNDEMALIRYSQQSDFRREIIKGSMRSQRRKTVIWEFFQAKVHSPLFFDRIDKLFFFSFDIWGLKKKIIKNFIWKKKIDKKEEEQSKREETRRIEIAETWDSFLFAQIIRGSLLVTQSILRKYIILPLLIIIKNSVRMLLFQFPEWSQDLKDWKREMHVKCTYNGVQLSETEFPRNWLTDGIQIKILFPFYLKPWHKSKFQASQKARLKKTKDKGEKNDFCFLTVWGMETELPFGSAQRKPSFFEPISKELKKRIKKLKKKSFVVLKIFKERAPIFLKVAKETKNWILKNFIFIKGISKRNLIPLFGPREIYELNEPKKDSIISNQMIHELSVQNKSLEWTNSSLSEKKIKNLIDRKKTIRNQIEEISKEKQNLTNSCTKLRYDSKIIESSKKIWQTFKRKNTRLIRKSIFFFKFCIEQMSIAIFLGIINIPRITTQLFFESTKKILDKYIYKNEENGEKKKNTLYFISTIKNLISNKKKMSYDLCSLSQAYVFYKLSQIKVSNFCKLKAVLEYNICITSFFVKNKIKVFFQEHGIFHYELKNKTFLNSEVNQWKNWLRSQYQYNLPQISWARLVTQNWKNKINKDSLVLNPSLTKEDSYEKKKFDNYKKQKFFEADSLLNPKHNVKKDSIYNLFCYKSIHSTEKNFDMSIGIALDNCLVSSFLEKYNIRGMGEIRHRKYLDWRILNFWFTKKVTIEPWVDTKSKKKYINTKVQNYQKIDKITQTDLANKKRNFFDWMGMNEEILNQRITNFEFFFFPEFFLFSSTYKMKPWVIPIKLLLLNFNENINVNKKIIRKKKGFIPSNEKESLRFYNLNKEEKESAGQVELESDKETKRNPEAARLNQEKNIEENFAESTIKKRKNKKQYKSNTEAELDLFLTRYSRFQLRWNCFFNQKILNNVKVYCLLVRLNNPNEIAVSSIERGEMSLDILMIEKNFTFAKLMKKGILIIEPVRLSVQNDGQLIIYRTIGISLVHKNKHKISKRYKKKSYINKKFFEKSITKYQNKTVNKKKNNYDFFVPEKILSPKRRREFRILICFNLKKKNARDTNSRFDKNIQNLTTVLHKKKDLDLDKDKNNLINLKSFLWPNFKLEDLACMNRYWFNTTNGNHFSMIRIRMYTRFPIP.

6 helical membrane-spanning segments follow: residues 19-39 (IINS…FSIG), 68-88 (FIAG…HLAL), 91-111 (PHTI…WNNH), 133-153 (VFLN…SSML), 176-196 (VGWL…LVWI), and 227-247 (IFSI…PSPI). A coiled-coil region spans residues 1007-1046 (SLSEKKIKNLIDRKKTIRNQIEEISKEKQNLTNSCTKLRY).

Belongs to the TIC214 family. In terms of assembly, part of the Tic complex. Component of the 1-MD complex, composed of TIC20-I, TIC214, TIC100 and TIC56. Interacts with the translocating preproteins. Hydrolysis of ATP is essential for the formation of this complex. The 1-MD complex interacts with TIC21.

It is found in the plastid. The protein localises to the chloroplast inner membrane. Involved in protein precursor import into chloroplasts. May be part of an intermediate translocation complex acting as a protein-conducting channel at the inner envelope. The protein is Protein TIC 214 of Arabidopsis thaliana (Mouse-ear cress).